A 220-amino-acid chain; its full sequence is Ribosomal RNA small subunit methyltransferase Nep1 (220 aa).

Residues glycine 178, glycine 183, and 196-201 (IYKEPL) each bind S-adenosyl-L-methionine.

Belongs to the class IV-like SAM-binding methyltransferase superfamily. RNA methyltransferase NEP1 family. Homodimer.

It carries out the reaction a pseudouridine in rRNA + S-adenosyl-L-methionine = an N(1)-methylpseudouridine in rRNA + S-adenosyl-L-homocysteine + H(+). Functionally, methyltransferase involved in ribosomal biogenesis. Specifically catalyzes the N1-methylation of the pseudouridine corresponding to position 914 in M.jannaschii 16S rRNA. This chain is Ribosomal RNA small subunit methyltransferase Nep1, found in Thermococcus sibiricus (strain DSM 12597 / MM 739).